A 313-amino-acid polypeptide reads, in one-letter code: Homoserine O-acetyltransferase (313 aa).

Cysteine 142 acts as the Acyl-thioester intermediate in catalysis. Residues lysine 163 and serine 191 each coordinate substrate. Catalysis depends on histidine 234, which acts as the Proton acceptor. Glutamate 236 is a catalytic residue. Residue arginine 248 participates in substrate binding.

It belongs to the MetA family.

It is found in the cytoplasm. The catalysed reaction is L-homoserine + acetyl-CoA = O-acetyl-L-homoserine + CoA. It participates in amino-acid biosynthesis; L-methionine biosynthesis via de novo pathway; O-acetyl-L-homoserine from L-homoserine: step 1/1. In terms of biological role, transfers an acetyl group from acetyl-CoA to L-homoserine, forming acetyl-L-homoserine. This is Homoserine O-acetyltransferase from Streptococcus sanguinis (strain SK36).